Reading from the N-terminus, the 248-residue chain is Type III pantothenate kinase (248 aa).

D8–K15 is an ATP binding site. Substrate-binding positions include Y87 and G94 to R97. Residue D96 is the Proton acceptor of the active site. ATP is bound at residue T119. T173 lines the substrate pocket.

This sequence belongs to the type III pantothenate kinase family. Homodimer. NH4(+) is required as a cofactor. Requires K(+) as cofactor.

The protein resides in the cytoplasm. It carries out the reaction (R)-pantothenate + ATP = (R)-4'-phosphopantothenate + ADP + H(+). It participates in cofactor biosynthesis; coenzyme A biosynthesis; CoA from (R)-pantothenate: step 1/5. Catalyzes the phosphorylation of pantothenate (Pan), the first step in CoA biosynthesis. The sequence is that of Type III pantothenate kinase from Methylobacillus flagellatus (strain ATCC 51484 / DSM 6875 / VKM B-1610 / KT).